The primary structure comprises 739 residues: Poly(A) polymerase gamma (739 aa).

At K2 the chain carries N6-acetyllysine. S23 carries the post-translational modification Phosphoserine. Residues 99–101, T108, 112–114, D166, K227, Y236, and 245–246 contribute to the ATP site; these read FGS, DID, and GV. Mg(2+) contacts are provided by D112, D114, and D166. Residues 506–566 form a disordered region; that stretch reads KSLSDVSRSS…PTGEIERSSA (61 aa). Composition is skewed to polar residues over residues 509-531 and 538-556; these read SDVSRSSGGLQSKRSSLDSTCLD and SGTPFNSPVSANKPSNPDS. Phosphoserine is present on S524. Residues S602 and S651 each carry the phosphoserine modification. A Phosphothreonine modification is found at T657. Over residues 677-688 the composition is skewed to basic and acidic residues; the sequence is SRAAEDRKRKPM. The interval 677-725 is disordered; that stretch reads SRAAEDRKRKPMDSIGGESMPIPTIDTARKKRLPSKELPDSSSPVPANN. S711 is modified (phosphoserine).

It belongs to the poly(A) polymerase family. Mg(2+) is required as a cofactor. It depends on Mn(2+) as a cofactor.

It localises to the nucleus. The catalysed reaction is RNA(n) + ATP = RNA(n)-3'-adenine ribonucleotide + diphosphate. Responsible for the post-transcriptional adenylation of the 3'-terminal of mRNA precursors and several small RNAs including signal recognition particle (SRP) RNA, nuclear 7SK RNA, U2 small nuclear RNA, and ribosomal 5S RNA. The protein is Poly(A) polymerase gamma (Papolg) of Mus musculus (Mouse).